Reading from the N-terminus, the 447-residue chain is ATP-dependent protease ATPase subunit HslU (447 aa).

Residues I18, 60 to 65, D259, E325, and R397 each bind ATP; that span reads GVGKTE.

This sequence belongs to the ClpX chaperone family. HslU subfamily. As to quaternary structure, a double ring-shaped homohexamer of HslV is capped on each side by a ring-shaped HslU homohexamer. The assembly of the HslU/HslV complex is dependent on binding of ATP.

It is found in the cytoplasm. In terms of biological role, ATPase subunit of a proteasome-like degradation complex; this subunit has chaperone activity. The binding of ATP and its subsequent hydrolysis by HslU are essential for unfolding of protein substrates subsequently hydrolyzed by HslV. HslU recognizes the N-terminal part of its protein substrates and unfolds these before they are guided to HslV for hydrolysis. This is ATP-dependent protease ATPase subunit HslU from Burkholderia cenocepacia (strain ATCC BAA-245 / DSM 16553 / LMG 16656 / NCTC 13227 / J2315 / CF5610) (Burkholderia cepacia (strain J2315)).